The primary structure comprises 185 residues: Probable DNA-directed RNA polymerase subunit delta (185 aa).

In terms of domain architecture, HTH HARE-type spans 14 to 81 (LSMIEVAHAI…GDNTWGLRAW (68 aa)). Positions 90-185 (ATVGENEEDE…DEEDEDEDDE (96 aa)) are disordered. Composition is skewed to acidic residues over residues 117–167 (DTDD…DDGI) and 175–185 (HDEEDEDEDDE).

It belongs to the RpoE family. In terms of assembly, RNAP is composed of a core of 2 alpha, a beta and a beta' subunits. The core is associated with a delta subunit and one of several sigma factors.

Its function is as follows. Participates in both the initiation and recycling phases of transcription. In the presence of the delta subunit, RNAP displays an increased specificity of transcription, a decreased affinity for nucleic acids, and an increased efficiency of RNA synthesis because of enhanced recycling. The polypeptide is Probable DNA-directed RNA polymerase subunit delta (Limosilactobacillus reuteri (strain DSM 20016) (Lactobacillus reuteri)).